We begin with the raw amino-acid sequence, 412 residues long: Serine hydroxymethyltransferase (412 aa).

(6S)-5,6,7,8-tetrahydrofolate contacts are provided by residues Leu-112 and 116-118 (GHL). Lys-221 is subject to N6-(pyridoxal phosphate)lysine. Glu-237 contacts (6S)-5,6,7,8-tetrahydrofolate.

This sequence belongs to the SHMT family. In terms of assembly, homodimer. Requires pyridoxal 5'-phosphate as cofactor.

The protein resides in the cytoplasm. It catalyses the reaction (6R)-5,10-methylene-5,6,7,8-tetrahydrofolate + glycine + H2O = (6S)-5,6,7,8-tetrahydrofolate + L-serine. Its pathway is one-carbon metabolism; tetrahydrofolate interconversion. It functions in the pathway amino-acid biosynthesis; glycine biosynthesis; glycine from L-serine: step 1/1. Functionally, catalyzes the reversible interconversion of serine and glycine with tetrahydrofolate (THF) serving as the one-carbon carrier. This reaction serves as the major source of one-carbon groups required for the biosynthesis of purines, thymidylate, methionine, and other important biomolecules. Also exhibits THF-independent aldolase activity toward beta-hydroxyamino acids, producing glycine and aldehydes, via a retro-aldol mechanism. The sequence is that of Serine hydroxymethyltransferase from Malacoplasma penetrans (strain HF-2) (Mycoplasma penetrans).